A 440-amino-acid polypeptide reads, in one-letter code: Serine/threonine-protein kinase STK11 (440 aa).

One can recognise a Protein kinase domain in the interval 49-309 (YLMGDLLGEG…IQQIRQHNWF (261 aa)). ATP-binding positions include 55 to 63 (LGEGSYGKV) and lysine 78. Aspartate 176 serves as the catalytic Proton acceptor. A phosphothreonine; by autocatalysis mark is found at threonine 336 and threonine 365. The segment at 370–440 (VPGQVPEEEA…IRKLSTCKQQ (71 aa)) is disordered. A compositionally biased stretch (basic residues) spans 430–440 (KIRKLSTCKQQ). A Phosphoserine; by PKA modification is found at serine 435.

It belongs to the protein kinase superfamily. CAMK Ser/Thr protein kinase family. LKB1 subfamily. As to quaternary structure, catalytic component of a trimeric complex composed of STK11/LKB1, STRAD (STRADA or STRADB) and CAB39/MO25 (CAB39/MO25alpha or CAB39L/MO25beta). The cofactor is Mg(2+). Mn(2+) is required as a cofactor. Ubiquitously expressed in all tissues tested. High levels were observed in duodenum and skeletal muscle, lower levels in liver and pancreas.

Its subcellular location is the nucleus. The protein resides in the cytoplasm. It carries out the reaction L-seryl-[protein] + ATP = O-phospho-L-seryl-[protein] + ADP + H(+). The enzyme catalyses L-threonyl-[protein] + ATP = O-phospho-L-threonyl-[protein] + ADP + H(+). Tumor suppressor serine/threonine-protein kinase that controls the activity of AMP-activated protein kinase (AMPK) family members, thereby playing a role in various processes such as cell metabolism, cell polarity, apoptosis and DNA damage response. Acts by phosphorylating the T-loop of AMPK family proteins, leading to promote their activity. This is Serine/threonine-protein kinase STK11 from Gallus gallus (Chicken).